A 786-amino-acid chain; its full sequence is DNA repair and recombination protein RAD54-like (786 aa).

A required for chromatin remodeling, strand pairing activities and coupling of ATPase activity region spans residues 2–9 (RRSLAPSQ). The residue at position 22 (threonine 22) is a Phosphothreonine. In terms of domain architecture, Helicase ATP-binding spans 165-340 (EGKRGNFNGC…FSLVNFVNPE (176 aa)). 178-185 (DEMGLGKT) provides a ligand contact to ATP. The DEGH box motif lies at 291–294 (DEGH). One can recognise a Helicase C-terminal domain in the interval 497–654 (LLDFMLAAIR…NNDSAEKHFT (158 aa)). Residues 740–786 (KQPTCITEDNHSEQPQLNSKRNANSVLENDDDEDFDPNSSDEKFLGF) are disordered. A compositionally biased stretch (polar residues) spans 752-766 (EQPQLNSKRNANSVL).

The protein belongs to the SNF2/RAD54 helicase family. In terms of assembly, interacts (via N-terminus) with spn-A/Rad51.

The protein resides in the nucleus. Functionally, involved in mitotic DNA repair and meiotic recombination. Functions in the recombinational DNA repair pathway. Essential for interhomolog gene conversion (GC), but may have a less important role in intersister GC than spn-A/Rad51. In the presence of DNA, spn-A/Rad51 enhances the ATPase activity of okr/Rad54. This is DNA repair and recombination protein RAD54-like from Drosophila virilis (Fruit fly).